A 422-amino-acid polypeptide reads, in one-letter code: 5'-deoxyadenosine deaminase (422 aa).

Zn(2+) is bound by residues His57 and His59. Substrate contacts are provided by Glu86 and His178. His205 contributes to the Zn(2+) binding site. Glu208 and Asp294 together coordinate substrate. A Zn(2+)-binding site is contributed by Asp294.

It belongs to the metallo-dependent hydrolases superfamily. MTA/SAH deaminase family. As to quaternary structure, homotetramer. Zn(2+) serves as cofactor.

It catalyses the reaction 5'-deoxyadenosine + H2O + H(+) = 5'-deoxyinosine + NH4(+). The catalysed reaction is S-adenosyl-L-homocysteine + H2O + H(+) = S-inosyl-L-homocysteine + NH4(+). It carries out the reaction S-methyl-5'-thioadenosine + H2O + H(+) = S-methyl-5'-thioinosine + NH4(+). The enzyme catalyses adenosine + H2O + H(+) = inosine + NH4(+). It functions in the pathway amino-acid biosynthesis; S-adenosyl-L-methionine biosynthesis. Its function is as follows. Catalyzes the deamination of three SAM-derived enzymatic products, namely 5'-deoxyadenosine, S-adenosyl-L-homocysteine, and 5'-methylthioadenosine, to produce the inosine analogs. Can also deaminate adenosine. The preferred substrate for this enzyme is 5'-deoxyadenosine, but all these substrates are efficiently deaminated. Likely functions in a S-adenosyl-L-methionine (SAM) recycling pathway from S-adenosyl-L-homocysteine (SAH) produced from SAM-dependent methylation reactions. May also be involved in the recycling of 5'-deoxyadenosine, whereupon the 5'-deoxyribose moiety of 5'-deoxyinosine is further metabolized to deoxyhexoses used for the biosynthesis of aromatic amino acids in methanogens. This is 5'-deoxyadenosine deaminase from Methanococcus maripaludis (strain C5 / ATCC BAA-1333).